The chain runs to 106 residues: Immunoglobulin lambda constant 1 (106 aa).

The 95-residue stretch at 7–101 (PTVTLFPPSS…EGSTVEKTVA (95 aa)) folds into the Ig-like domain. Cysteine 28 and cysteine 87 are oxidised to a cystine.

Immunoglobulins are composed of two identical heavy chains and two identical light chains; disulfide-linked.

Its subcellular location is the secreted. The protein localises to the cell membrane. In terms of biological role, constant region of immunoglobulin light chains. Immunoglobulins, also known as antibodies, are membrane-bound or secreted glycoproteins produced by B lymphocytes. In the recognition phase of humoral immunity, the membrane-bound immunoglobulins serve as receptors which, upon binding of a specific antigen, trigger the clonal expansion and differentiation of B lymphocytes into immunoglobulins-secreting plasma cells. Secreted immunoglobulins mediate the effector phase of humoral immunity, which results in the elimination of bound antigens. The antigen binding site is formed by the variable domain of one heavy chain, together with that of its associated light chain. Thus, each immunoglobulin has two antigen binding sites with remarkable affinity for a particular antigen. The variable domains are assembled by a process called V-(D)-J rearrangement and can then be subjected to somatic hypermutations which, after exposure to antigen and selection, allow affinity maturation for a particular antigen. The sequence is that of Immunoglobulin lambda constant 1 from Homo sapiens (Human).